A 375-amino-acid chain; its full sequence is DnaJ homolog subfamily B member 12 (375 aa).

M1 carries the post-translational modification N-acetylmethionine. Over 1-243 the chain is Cytoplasmic; that stretch reads MESNKDEAER…DRRDNQGDGG (243 aa). Positions 45 to 92 are disordered; it reads ALIESLNQKPQTAGDQPPPTDTTHATHRKAGGTDAPSANGEAGGESTK. Positions 49–58 are enriched in polar residues; sequence SLNQKPQTAG. The J domain occupies 112–176; the sequence is YEILGVSRGA…RKQYDQFGDD (65 aa). Pros-methylhistidine is present on H185. The chain crosses the membrane as a helical span at residues 244-264; that stretch reads LGVFVQLMPILILILVSALSQ. The Lumenal segment spans residues 265–375; sequence LMVSSPPYSL…LSEVQASLHG (111 aa).

It belongs to the DnaJ family. DNAJB12/DNAJB14 subfamily. In terms of assembly, homodimer and homotetramer. Interacts (via J domain) with HSPA8/Hsc70. Forms a multiprotein complex, at least composed of DNAJB12, DNAJB14, HSPA8/Hsc70 and SGTA; interaction with DNAJB14 and HSPA8/Hsc70 is direct. Post-translationally, methylated at His-185 by METTL9.

The protein resides in the endoplasmic reticulum membrane. It is found in the nucleus membrane. In terms of biological role, acts as a co-chaperone with HSPA8/Hsc70; required to promote protein folding and trafficking, prevent aggregation of client proteins, and promote unfolded proteins to endoplasmic reticulum-associated degradation (ERAD) pathway. Acts by determining HSPA8/Hsc70's ATPase and polypeptide-binding activities. Can also act independently of HSPA8/Hsc70: together with DNAJB14, acts as a chaperone that promotes maturation of potassium channels KCND2 and KCNH2 by stabilizing nascent channel subunits and assembling them into tetramers. While stabilization of nascent channel proteins is dependent on HSPA8/Hsc70, the process of oligomerization of channel subunits is independent of HSPA8/Hsc70. When overexpressed, forms membranous structures together with DNAJB14 and HSPA8/Hsc70 within the nucleus; the role of these structures, named DJANGOs, is still unclear. Its function is as follows. (Microbial infection) In case of infection by polyomavirus, involved in the virus endoplasmic reticulum membrane penetration and infection. This is DnaJ homolog subfamily B member 12 from Homo sapiens (Human).